Here is a 139-residue protein sequence, read N- to C-terminus: D-ribose pyranase (139 aa).

The active-site Proton donor is the histidine 20. Substrate-binding positions include aspartate 28, histidine 106, and 128–130 (YAN).

It belongs to the RbsD / FucU family. RbsD subfamily. As to quaternary structure, homodecamer.

The protein resides in the cytoplasm. It catalyses the reaction beta-D-ribopyranose = beta-D-ribofuranose. The protein operates within carbohydrate metabolism; D-ribose degradation; D-ribose 5-phosphate from beta-D-ribopyranose: step 1/2. In terms of biological role, catalyzes the interconversion of beta-pyran and beta-furan forms of D-ribose. The polypeptide is D-ribose pyranase (Pectobacterium carotovorum subsp. carotovorum (strain PC1)).